A 66-amino-acid chain; its full sequence is Hemicalcin (66 aa).

The N-terminal stretch at 1–21 (MRASLFIVIFVVSFITISCLS) is a signal peptide. Positions 22–33 (TDDEEARWIEKR) are excised as a propeptide. 3 cysteine pairs are disulfide-bonded: Cys36–Cys50, Cys43–Cys54, and Cys49–Cys65. The tract at residues 55–57 (KRR) is essential for stimulation of [3H]ryanodine binding to RYR1.

It belongs to the scorpion calcin family. In terms of tissue distribution, expressed by the venom gland.

It is found in the secreted. In terms of biological role, this toxin stabilizes ryanodine receptor 1 (RyR1) opening in a long-lasting subconductance state (20% and 38% of the full conductance state have been found). It promotes an increase in the opening probability at intermediate concentration. Furthermore, it triggers calcium release from sarcoplasmic vesicles (68 nM are enough to induce a sharp release, and 45% of the total calcium is released after toxin (100 nM) addition) probably by acting as a cell-penetrating peptide (CPP). In addition, it has been shown to dose-dependently stimulate ryanodine binding to RyR1 (EC(50)=6.9-71 nM). It also augments the bell-shaped calcium-[3H]ryanodine binding curve that is maximal at about 10 uM calcium concentration. It binds a different site as ryanodine. It acts synergistically with caffeine. In vivo, intracerebroventricular injection into mice induces neurotoxic symptoms, followed by death. The polypeptide is Hemicalcin (Hemiscorpius lepturus (Scorpion)).